The chain runs to 245 residues: Probable transcriptional regulatory protein APH_0480 (245 aa).

Belongs to the TACO1 family.

The protein localises to the cytoplasm. The polypeptide is Probable transcriptional regulatory protein APH_0480 (Anaplasma phagocytophilum (strain HZ)).